The following is a 111-amino-acid chain: Ig heavy chain V-III region HPC76 (111 aa).

The Ig-like domain occupies 1–110 (ESGGGLVQPG…WGQGTTLTVS (110 aa)).

In Mus musculus (Mouse), this protein is Ig heavy chain V-III region HPC76.